The chain runs to 83 residues: Small ribosomal subunit protein bS16 (83 aa).

The protein belongs to the bacterial ribosomal protein bS16 family.

The polypeptide is Small ribosomal subunit protein bS16 (Borrelia turicatae (strain 91E135)).